We begin with the raw amino-acid sequence, 159 residues long: Large ribosomal subunit protein eL29 (159 aa).

The span at 1–26 (MAKSKNHTTHNQSRKWHRNGIKKPRS) shows a compositional bias: basic residues. The tract at residues 1 to 32 (MAKSKNHTTHNQSRKWHRNGIKKPRSQRYESL) is disordered. At Lys5 the chain carries N6-methyllysine. Ser31 carries the phosphoserine modification. Lys33 is modified (N6-acetyllysine). Basic residues predominate over residues 117 to 127 (RLCRPKAKAKA). The segment at 117-159 (RLCRPKAKAKAKAKDQTKAQAAAPASVPAQAPKRTQAPTKASE) is disordered. A compositionally biased stretch (low complexity) spans 134–149 (KAQAAAPASVPAQAPK). Ser142 bears the Phosphoserine mark.

Belongs to the eukaryotic ribosomal protein eL29 family. As to quaternary structure, component of the large ribosomal subunit.

It localises to the cytoplasm. Its function is as follows. Component of the large ribosomal subunit. The ribosome is a large ribonucleoprotein complex responsible for the synthesis of proteins in the cell. The polypeptide is Large ribosomal subunit protein eL29 (RPL29) (Homo sapiens (Human)).